The following is a 96-amino-acid chain: Protein YddL (96 aa).

Positions 1–21 (MKLKIVAVVVTGLLAANVAHA) are cleaved as a signal peptide.

The protein is Protein YddL (yddL) of Escherichia coli (strain K12).